The following is a 368-amino-acid chain: Phosphoserine aminotransferase (368 aa).

R42 serves as a coordination point for L-glutamate. The pyridoxal 5'-phosphate site is built by W101, T151, D175, and Q198. K199 carries the N6-(pyridoxal phosphate)lysine modification. A pyridoxal 5'-phosphate-binding site is contributed by 240–241; sequence NT.

The protein belongs to the class-V pyridoxal-phosphate-dependent aminotransferase family. SerC subfamily. As to quaternary structure, homodimer. It depends on pyridoxal 5'-phosphate as a cofactor.

The protein resides in the cytoplasm. The enzyme catalyses O-phospho-L-serine + 2-oxoglutarate = 3-phosphooxypyruvate + L-glutamate. It catalyses the reaction 4-(phosphooxy)-L-threonine + 2-oxoglutarate = (R)-3-hydroxy-2-oxo-4-phosphooxybutanoate + L-glutamate. It functions in the pathway amino-acid biosynthesis; L-serine biosynthesis; L-serine from 3-phospho-D-glycerate: step 2/3. Its pathway is cofactor biosynthesis; pyridoxine 5'-phosphate biosynthesis; pyridoxine 5'-phosphate from D-erythrose 4-phosphate: step 3/5. Functionally, catalyzes the reversible conversion of 3-phosphohydroxypyruvate to phosphoserine and of 3-hydroxy-2-oxo-4-phosphonooxybutanoate to phosphohydroxythreonine. This chain is Phosphoserine aminotransferase, found in Polaromonas sp. (strain JS666 / ATCC BAA-500).